We begin with the raw amino-acid sequence, 77 residues long: Large ribosomal subunit protein uL29 (77 aa).

The protein belongs to the universal ribosomal protein uL29 family.

The protein is Large ribosomal subunit protein uL29 (rpmC) of Mycobacterium bovis (strain ATCC BAA-935 / AF2122/97).